A 21-amino-acid chain; its full sequence is Cupiennin-6e (21 aa).

Serine 21 is modified (serine amide).

In terms of tissue distribution, expressed by the venom gland.

The protein resides in the secreted. The chain is Cupiennin-6e from Cupiennius salei (American wandering spider).